A 367-amino-acid chain; its full sequence is Homoserine O-acetyltransferase (367 aa).

One can recognise an AB hydrolase-1 domain in the interval 44–350; sequence NAILVTHAWT…AYGHDAFLLE (307 aa). S150 functions as the Nucleophile in the catalytic mechanism. A substrate-binding site is contributed by R217. Active-site residues include D311 and H344. D345 lines the substrate pocket.

It belongs to the AB hydrolase superfamily. MetX family. As to quaternary structure, homodimer.

Its subcellular location is the cytoplasm. It catalyses the reaction L-homoserine + acetyl-CoA = O-acetyl-L-homoserine + CoA. The protein operates within amino-acid biosynthesis; L-methionine biosynthesis via de novo pathway; O-acetyl-L-homoserine from L-homoserine: step 1/1. Functionally, transfers an acetyl group from acetyl-CoA to L-homoserine, forming acetyl-L-homoserine. The sequence is that of Homoserine O-acetyltransferase from Citrifermentans bemidjiense (strain ATCC BAA-1014 / DSM 16622 / JCM 12645 / Bem) (Geobacter bemidjiensis).